Consider the following 668-residue polypeptide: Probable syringafactin export ATP-binding/permease protein SyfD (668 aa).

In terms of domain architecture, ABC transporter spans 22–260; the sequence is LRLQQVSRSF…APEAQPATPP (239 aa). 58-65 contributes to the ATP binding site; the sequence is GASGSGKS. Residues 242–263 are disordered; sequence RRTAQTTQPAPEAQPATPPGPA. Positions 245 to 256 are enriched in low complexity; it reads AQTTQPAPEAQP. 5 helical membrane passes run 267-287, 293-313, 541-561, 602-622, and 631-651; these read LLAS…ALIS, LLTM…SAIG, LTLL…IGVM, MGGV…TLFV, and LASV…FGFV.

This sequence belongs to the ABC transporter superfamily. Macrolide exporter (TC 3.A.1.122) family. Probably part of a tripartite efflux system, which is composed of an inner membrane transporter, a periplasmic membrane fusion protein, and an outer membrane component.

The protein resides in the cell inner membrane. Functionally, probably involved in the export of syringafactins. This is Probable syringafactin export ATP-binding/permease protein SyfD from Pseudomonas syringae pv. tomato (strain ATCC BAA-871 / DC3000).